The chain runs to 633 residues: MDYDYEKLGLKVGLEIHQQLNTKRKLFCNCPTKIRDDEPHGEIERFLRPSQSEMGQVDKAAILESRKEKKFIYQYYNDTTCLVELDDEPPHNVSEEGLNTALEVSTLMNMNFADEIHVMRKMVIDGSNTSGFQRTMFVSQDGFIETEYGKIRITSLCLEEDSCKKVEDGRDYTKYCVDRLGIPLLEITTEPDITSPKMGKEAARRIGTILRATGKVKRGLGTIRQDVNISIKNGARIEVKGVQNLDLIEKIIENEVTRQVSLNNLKEELIGRNAEVLDEIIDVTELLNDTESKVLRGALKNKGVIKAILLKGFSGLIGKEVQPGRRLGTEFSDRGKVLGGVGGLFHTDELPKYGITDEEVNKLKKFMNCGENDAVILVADAKNKAERALLAVIERAKESLIGIPEETRKALDDGNTSYLRPLPGAARMYPETDVPKILITSEICERIKNNLPEMPEEKTIRFIKEYELNEDLAKQMVMSYNVELFENLSKKYPNIKPTLIATTLEATLKEIKREGLDTEVLTDEHLNELFLGLSEDKMSKEAIPEVIKGYINNPNMKLDEVLDVAGLSKMSKEEVEAVILDIINQNILIVNEKGMGATGLLMGRCMAQLRGKADGKLINVTLQNKLKEKVQGQ.

Belongs to the GatB/GatE family. GatE subfamily. As to quaternary structure, heterodimer of GatD and GatE.

It catalyses the reaction L-glutamyl-tRNA(Gln) + L-glutamine + ATP + H2O = L-glutaminyl-tRNA(Gln) + L-glutamate + ADP + phosphate + H(+). Its function is as follows. Allows the formation of correctly charged Gln-tRNA(Gln) through the transamidation of misacylated Glu-tRNA(Gln) in organisms which lack glutaminyl-tRNA synthetase. The reaction takes place in the presence of glutamine and ATP through an activated gamma-phospho-Glu-tRNA(Gln). The GatDE system is specific for glutamate and does not act on aspartate. This is Glutamyl-tRNA(Gln) amidotransferase subunit E from Methanococcus vannielii (strain ATCC 35089 / DSM 1224 / JCM 13029 / OCM 148 / SB).